Here is a 95-residue protein sequence, read N- to C-terminus: Aspartyl/glutamyl-tRNA(Asn/Gln) amidotransferase subunit C (95 aa).

It belongs to the GatC family. Heterotrimer of A, B and C subunits.

The catalysed reaction is L-glutamyl-tRNA(Gln) + L-glutamine + ATP + H2O = L-glutaminyl-tRNA(Gln) + L-glutamate + ADP + phosphate + H(+). It catalyses the reaction L-aspartyl-tRNA(Asn) + L-glutamine + ATP + H2O = L-asparaginyl-tRNA(Asn) + L-glutamate + ADP + phosphate + 2 H(+). Allows the formation of correctly charged Asn-tRNA(Asn) or Gln-tRNA(Gln) through the transamidation of misacylated Asp-tRNA(Asn) or Glu-tRNA(Gln) in organisms which lack either or both of asparaginyl-tRNA or glutaminyl-tRNA synthetases. The reaction takes place in the presence of glutamine and ATP through an activated phospho-Asp-tRNA(Asn) or phospho-Glu-tRNA(Gln). This Rhodopseudomonas palustris (strain ATCC BAA-98 / CGA009) protein is Aspartyl/glutamyl-tRNA(Asn/Gln) amidotransferase subunit C.